A 563-amino-acid chain; its full sequence is MIASGADTQSDALVRQSAKVQFGDYQANGIMAAAKKLGRNPREFAQQVIEQLDLSEIAEKIEIAGPGFINLFLDKNWLAEQISLAVNDDKLGIQATETQTVVADYSSPNVAKEMHVGHLRSTIIGDAVVRTLEFLGNKVIRANHVGDWGTQFGMLIAYLEKVENESASEMELSDLEAFYRAAKEHYDSDPVFAEKARNYVVKLQSGDEYCRTMWKKLVDITMQQNQHNYDRLNVTLTEKDVMGESLYNPMLSDIVADLKQQGLAVEDEGAFVVYLDEFKNKEGEPMGVIVQKKDGGFLYTTTDIAAAKYRYETLKADRALVFSDTRQSQHMQQAWLITRKAGYVPDSFQLEHKNFGMMLGKDGKPFKTRTGGTVKLADLLDEAVERATQLIQEKSTALSAQEKAAVIEAVAIGSVKYADLSKNRTTDYVFDWDNMLSFEGNTAPYMQYAYTRIRSIFNRSELNEQDLSESPVVLSNEKERLLAIKLLQFEEAIQIVAKEGTPHVLCTYLYELAGVFSSFYEHCPILNNEDEQIKRSRLKLALLTEKTLKQGLDLLGIKTVDKM.

Positions 108–118 (PNVAKEMHVGH) match the 'HIGH' region motif.

This sequence belongs to the class-I aminoacyl-tRNA synthetase family. Monomer.

The protein resides in the cytoplasm. It catalyses the reaction tRNA(Arg) + L-arginine + ATP = L-arginyl-tRNA(Arg) + AMP + diphosphate. This is Arginine--tRNA ligase (argS) from Pasteurella multocida (strain Pm70).